The sequence spans 102 residues: MNKARIKLTGTDPEKIADVCNQLKKIAERTGVDLSGPIPLPTKKLVVPTRKSPDGEGKATWEKWELRIHKRLVGIEADERAMRQVMKVNVPDNVSIEIELKA.

It belongs to the universal ribosomal protein uS10 family. As to quaternary structure, part of the 30S ribosomal subunit.

In terms of biological role, involved in the binding of tRNA to the ribosomes. The protein is Small ribosomal subunit protein uS10 of Methanosphaera stadtmanae (strain ATCC 43021 / DSM 3091 / JCM 11832 / MCB-3).